Consider the following 258-residue polypeptide: UPF0246 protein YPK_3600 (258 aa).

This sequence belongs to the UPF0246 family.

The chain is UPF0246 protein YPK_3600 from Yersinia pseudotuberculosis serotype O:3 (strain YPIII).